The chain runs to 253 residues: Probable transcriptional regulatory protein slr0989 (253 aa).

The tract at residues 1–22 (MGGRKWQSIKRQKARVDAQKGK) is disordered.

Belongs to the TACO1 family.

It is found in the cytoplasm. The chain is Probable transcriptional regulatory protein slr0989 from Synechocystis sp. (strain ATCC 27184 / PCC 6803 / Kazusa).